Here is a 332-residue protein sequence, read N- to C-terminus: MDKVAEIWGTVPQYGQWALAGIGALYVATRVGAFLQLLLNAFILSGTNLRKYGKKGTWAVITGASDGLGKEFAQQLASKGFNLVLVSRTQSKLDVLARELELRWDGFKAKTFAMDFSKDDDSDYERLAELIKGLDIGILINNVGQSHSIPVPFLQTDRDELQNIVTINCLGTLKTTKVVAPILAQRKKGLILTMGSFAGVMPTPYLATYSGSKAFLQHWSSALSAELKDQGVDVHLVVSYLVTTAMSKIRRTSLLIPNPKQFVRAALGKVGLNSSEPFPNTYTPWWSHAVFKWVVENTVGAYSYFTLRLNKNMHIDIRNRALRKAAREAKKQ.

Residues 15-35 (GQWALAGIGALYVATRVGAFL) traverse the membrane as a helical segment. Residues Val60, Asp115, Asp123, Asn142, Lys177, Tyr209, Lys213, Val242, and Thr244 each coordinate NADP(+). Tyr209 acts as the Proton donor in catalysis. The Lowers pKa of active site Tyr role is filled by Lys213.

It belongs to the short-chain dehydrogenases/reductases (SDR) family.

The protein localises to the endoplasmic reticulum membrane. It carries out the reaction a very-long-chain (3R)-3-hydroxyacyl-CoA + NADP(+) = a very-long-chain 3-oxoacyl-CoA + NADPH + H(+). It participates in lipid metabolism; fatty acid biosynthesis. Its function is as follows. Component of the microsomal membrane bound fatty acid elongation system, which produces the 26-carbon very long-chain fatty acids (VLCFA) from palmitate. Catalyzes the reduction of the 3-ketoacyl-CoA intermediate that is formed in each cycle of fatty acid elongation. VLCFAs serve as precursors for ceramide and sphingolipids. This is Very-long-chain 3-oxoacyl-CoA reductase from Neurospora crassa (strain ATCC 24698 / 74-OR23-1A / CBS 708.71 / DSM 1257 / FGSC 987).